The primary structure comprises 178 residues: ATP-dependent protease subunit HslV (178 aa).

Residue T2 is part of the active site. Residues G157, C160, and T163 each coordinate Na(+).

It belongs to the peptidase T1B family. HslV subfamily. In terms of assembly, a double ring-shaped homohexamer of HslV is capped on each side by a ring-shaped HslU homohexamer. The assembly of the HslU/HslV complex is dependent on binding of ATP.

It localises to the cytoplasm. It catalyses the reaction ATP-dependent cleavage of peptide bonds with broad specificity.. Its activity is regulated as follows. Allosterically activated by HslU binding. Its function is as follows. Protease subunit of a proteasome-like degradation complex believed to be a general protein degrading machinery. The chain is ATP-dependent protease subunit HslV from Hamiltonella defensa subsp. Acyrthosiphon pisum (strain 5AT).